Reading from the N-terminus, the 361-residue chain is Peptide chain release factor 1 (361 aa).

Position 237 is an N5-methylglutamine (glutamine 237).

Belongs to the prokaryotic/mitochondrial release factor family. In terms of processing, methylated by PrmC. Methylation increases the termination efficiency of RF1.

The protein localises to the cytoplasm. Its function is as follows. Peptide chain release factor 1 directs the termination of translation in response to the peptide chain termination codons UAG and UAA. The polypeptide is Peptide chain release factor 1 (Alcanivorax borkumensis (strain ATCC 700651 / DSM 11573 / NCIMB 13689 / SK2)).